The sequence spans 185 residues: Transcription antitermination protein NusB (185 aa).

The protein belongs to the NusB family.

In terms of biological role, involved in transcription antitermination. Required for transcription of ribosomal RNA (rRNA) genes. Binds specifically to the boxA antiterminator sequence of the ribosomal RNA (rrn) operons. The polypeptide is Transcription antitermination protein NusB (Rhodospirillum rubrum (strain ATCC 11170 / ATH 1.1.1 / DSM 467 / LMG 4362 / NCIMB 8255 / S1)).